The chain runs to 373 residues: Anhydro-N-acetylmuramic acid kinase (373 aa).

12 to 19 (GTSLDGVD) is an ATP binding site.

Belongs to the anhydro-N-acetylmuramic acid kinase family.

It carries out the reaction 1,6-anhydro-N-acetyl-beta-muramate + ATP + H2O = N-acetyl-D-muramate 6-phosphate + ADP + H(+). It participates in amino-sugar metabolism; 1,6-anhydro-N-acetylmuramate degradation. The protein operates within cell wall biogenesis; peptidoglycan recycling. Catalyzes the specific phosphorylation of 1,6-anhydro-N-acetylmuramic acid (anhMurNAc) with the simultaneous cleavage of the 1,6-anhydro ring, generating MurNAc-6-P. Is required for the utilization of anhMurNAc either imported from the medium or derived from its own cell wall murein, and thus plays a role in cell wall recycling. The sequence is that of Anhydro-N-acetylmuramic acid kinase from Erwinia tasmaniensis (strain DSM 17950 / CFBP 7177 / CIP 109463 / NCPPB 4357 / Et1/99).